A 60-amino-acid polypeptide reads, in one-letter code: MAQLKITQTKSYIGSKQNHRDTLRSLGLKGINTQVVKEDRPEFRGMVHTVRHLVTVEEVD.

The protein belongs to the universal ribosomal protein uL30 family. In terms of assembly, part of the 50S ribosomal subunit.

The polypeptide is Large ribosomal subunit protein uL30 (Streptomyces avermitilis (strain ATCC 31267 / DSM 46492 / JCM 5070 / NBRC 14893 / NCIMB 12804 / NRRL 8165 / MA-4680)).